The chain runs to 793 residues: E3 UFM1-protein ligase 1 (793 aa).

Ala2 carries the post-translational modification N-acetylalanine. The interval 2-200 is mediates interaction with DDRGK1; the sequence is ADAWEEIRRL…RGLFSAITRP (199 aa). Positions 2–212 are required for E3 UFM1-protein ligase activity; sequence ADAWEEIRRL…VNSLVSKYGF (211 aa). The involved in CDK5RAP3-binding stretch occupies residues 121-250; the sequence is DQLSEEVNDK…KAVFVPDIYS (130 aa). The mediates interaction with TRIP4 stretch occupies residues 200-400; the sequence is PTPVNSLVSK…NPVHLITEED (201 aa). The disordered stretch occupies residues 410–473; it reads VNTSKKDKKD…SSHGGKKKPD (64 aa). Arg433 carries the omega-N-methylarginine modification. Ser458 and Ser462 each carry phosphoserine. The segment at 490–683 is mediates interaction with CDK5RAP3; sequence IQDAPEEFIS…QLKVTEDPAL (194 aa). The residue at position 535 (Thr535) is a Phosphothreonine. The disordered stretch occupies residues 742–765; the sequence is NKKTGQGEDPSSDELDKEQHDVTN. A phosphoserine mark is found at Ser752 and Ser753.

It belongs to the UFL1 family. In terms of assembly, catalytic component of the UFM1 ribosome E3 ligase (UREL) complex, composed of UFL1, DDRGK1 and CDK5RAP3. Interacts with E2-like enzyme UFC1. Interacts with RELA. Interacts with NBN; promoting recruitment to double-strand breaks following DNA damage. Interacts (when phosphorylated) with YWHAG/14-3-3-gamma; sequestering UFL1 and preventing its association with PDCD1/PD-1 substrate. Post-translationally, ubiquitinated, leading to its degradation by the proteasome. Interaction with CDK5RAP3 protects both proteins against ubiquitination and degradation via the proteasome. In terms of processing, phosphorylated at Ser-462 by ATM, enhancing protein ligase activity and promoting ATM activation in a positive feedback loop. Phosphorylation at Thr-535 by AMPK promotes its interaction with YWHAG/14-3-3-gamma, thereby preventing UFL1 association with PDCD1/PD-1 substrate. Ubiquitously expressed with higher expression in pancreatic islets and other secretory tissues. In the embryonic brain at 17 dpc, detected in Sox2-positive neural stem cells and in Slc1a3/GLAST-positive radial glia. In perinatal brain, highly expressed in Slc1a3-positive Bergmann glia of the cerebellum. Continues to be expressed in Bergmann glia of adult brain at 16 weeks. Expressed in adult heart. Highly expressed in the intestinal exocrine cells.

The protein resides in the endoplasmic reticulum membrane. It localises to the cytoplasm. It is found in the cytosol. Its subcellular location is the nucleus. The protein localises to the chromosome. Functionally, E3 protein ligase that mediates ufmylation, the covalent attachment of the ubiquitin-like modifier UFM1 to lysine residues on target proteins, and which plays a key role in various processes, such as ribosome recycling, response to DNA damage, interferon response or reticulophagy (also called ER-phagy). Catalyzes ufmylation of many protein, such as CD274/PD-L1, CDK5RAP3, CYB5R3, DDRGK1, EIF6, histone H4, MRE11, P4HB, PDCD1/PD-1, TRIP4, RPN1, RPS20/uS10, RPL10/uL16, RPL26/uL24, SYVN1/HRD1 and TP53/p53. As part of the UREL complex, plays a key role in ribosome recycling by catalyzing mono-ufmylation of RPL26/uL24 subunit of the 60S ribosome. Ufmylation of RPL26/uL24 occurs on free 60S ribosomes following ribosome dissociation: it weakens the junction between post-termination 60S subunits and SEC61 translocons, promoting release and recycling of the large ribosomal subunit from the endoplasmic reticulum membrane. Ufmylation of RPL26/uL24 and subsequent 60S ribosome recycling either take place after normal termination of translation or after ribosome stalling during cotranslational translocation at the endoplasmic reticulum. Involved in reticulophagy in response to endoplasmic reticulum stress by mediating ufmylation of proteins such as CYB5R3 and RPN1, thereby promoting lysosomal degradation of ufmylated proteins. Ufmylation in response to endoplasmic reticulum stress is essential for processes such as hematopoiesis, blood vessel morphogenesis or inflammatory response. Mediates ufmylation of DDRGK1 and CDK5RAP3; the role of these modifications is however unclear: as both DDRGK1 and CDK5RAP3 act as substrate adapters for ufmylation, it is uncertain whether ufmylation of these proteins is a collateral effect or is required for ufmylation. Acts as a negative regulator of T-cell activation by mediating ufmylation and stabilization of PDCD1/PD-1. Also involved in the response to DNA damage: recruited to double-strand break sites following DNA damage and mediates monoufmylation of histone H4 and ufmylation of MRE11. Mediates ufmylation of TP53/p53, promoting its stability. Catalyzes ufmylation of TRIP4, thereby playing a role in nuclear receptor-mediated transcription. Required for hematopoietic stem cell function and hematopoiesis. The protein is E3 UFM1-protein ligase 1 of Mus musculus (Mouse).